We begin with the raw amino-acid sequence, 130 residues long: Galectin-2 (130 aa).

Residues Lys4–Glu130 form the Galectin domain. Residue Trp65–Glu71 coordinates a beta-D-galactoside.

Homodimer.

This protein binds beta-galactoside. Its physiological function is not yet known. This Mus musculus (Mouse) protein is Galectin-2 (Lgals2).